The primary structure comprises 430 residues: Functional amyloid transporter FapF (430 aa).

An N-terminal signal peptide occupies residues 1 to 24 (MHRSLSLRAVVCLSTLLPASLLYA). Residues 25 to 131 (APDVDIETLK…EASGFFGNGK (107 aa)) are Periplasmic-facing. Residues 29-64 (DIETLKQELLELKQRYEAQQKALAVLEQRVRQVEDQ) adopt a coiled-coil conformation. Residues 62-114 (EDQPATPAPKRLAKSPADFKQSGSTVAASSGTGGATGGSSYGQSLKDDSEPAQ) are disordered. Residues 92 to 101 (GTGGATGGSS) are compositionally biased toward gly residues. Positions 113-125 (AQSVSNLYNEASG) are alpha helical plug. A beta stranded membrane pass occupies residues 132 to 142 (FSFETGITYAR). At 143 to 172 (YDARQLTLNGFLALDSIFLGNINLDRIKAD) the chain is on the extracellular side. The chain crosses the membrane as a beta stranded span at residues 173 to 183 (NWTLDLTGRYN). Residues 184 to 189 (LDNRWQ) lie on the Periplasmic side of the membrane. Residues 190–198 (FDVNVPVVY) traverse the membrane as a beta stranded segment. At 199–224 (RESTYQSGGASGGDPQATSEESVSRD) the chain is on the extracellular side. A disordered region spans residues 203 to 223 (YQSGGASGGDPQATSEESVSR). The beta stranded transmembrane segment at 225–238 (PTIGDVNFGIAYKF) threads the bilayer. Residues 239 to 246 (LDESATMP) lie on the Periplasmic side of the membrane. The beta stranded transmembrane segment at 247–256 (DAVVSVRVKA) threads the bilayer. Over 257–288 (PTGKEPFGIKLVRSTANDNLYVPESLPTGNGV) the chain is Extracellular. A beta stranded membrane pass occupies residues 289–298 (WSITPGLSLV). At 299-304 (KTFDPA) the chain is on the periplasmic side. The chain crosses the membrane as a beta stranded span at residues 305–314 (VLFGSVSYTH). The Extracellular segment spans residues 315 to 339 (NLEDSFDDISSDVNQKVGGKVRLGD). A beta stranded membrane pass occupies residues 340–348 (SFQFGVGVA). Topologically, residues 349–356 (FALNERMS) are periplasmic. The chain crosses the membrane as a beta stranded span at residues 357-365 (MSFSVSDLI). Over 366-386 (QRKSKLKPDGGGWQSIVSSDA) the chain is Extracellular. Residues 387-397 (NAGYFNVGMTI) form a beta stranded membrane-spanning segment. At 398-404 (AASENLT) the chain is on the periplasmic side. Residues 405 to 412 (IVPNLAIG) form a beta stranded membrane-spanning segment. Residues 413-419 (MTDDAPD) are Extracellular-facing. The chain crosses the membrane as a beta stranded span at residues 420–428 (FTFSLKFPY). Residues 429-430 (YF) are Periplasmic-facing.

The protein belongs to the amyloid transporter (TC 9.B.153) family. As to quaternary structure, homotrimer.

Its subcellular location is the cell outer membrane. Functionally, transports fibril components across the outer membrane. Upon overexpression of the endogenous six-gene locus (fapA-fapF) in situ cells form large clumps during liquid growth, make large amounts of biofilm and produce amyloid fibrils. Expression of the 6 gene operon in E.coli strain BL21(DE3) induces flocculation and biofilm formation with copious extracellular fibrils. This chain is Functional amyloid transporter FapF, found in Pseudomonas fluorescens.